A 178-amino-acid polypeptide reads, in one-letter code: Endothelin-2 (178 aa).

A signal peptide spans 1–26 (MVAMPTAWCSIALALLLALHEGKGQV). The propeptide occupies 27-46 (AAAPDQPAPSHRARASHLRP). 2 cysteine pairs are disulfide-bonded: C49/C63 and C51/C59. The propeptide occupies 70–178 (VNTPGQTAPY…RPTHSRRWKR (109 aa)). Residues 96–111 (CECSSGRDPACATFCH) are endothelin-like.

Belongs to the endothelin/sarafotoxin family.

It is found in the secreted. In terms of biological role, endothelins are endothelium-derived vasoconstrictor peptides. The sequence is that of Endothelin-2 (EDN2) from Felis catus (Cat).